The following is a 56-amino-acid chain: Trypsin inhibitor 1 (56 aa).

Residues 1–25 (MATTMAKLITLVVLAILAFVEVSVS) form the signal peptide. The propeptide occupies 26–39 (GYKTSISTITIEDN). The segment at residues 40 to 53 (GRCTKSIPPICFPD) is a cross-link (cyclopeptide (Gly-Asp)). C42 and C50 are disulfide-bonded. Positions 54–56 (GRP) are excised as a propeptide.

In terms of processing, this is a cyclic peptide.

Functionally, inhibits trypsin, cathepsin G, elastase, chymotrypsin and thrombin. Does not inhibit factor Xa. This Helianthus annuus (Common sunflower) protein is Trypsin inhibitor 1.